Here is a 189-residue protein sequence, read N- to C-terminus: ATP synthase subunit b 1 (189 aa).

Residues Thr32 to Leu52 traverse the membrane as a helical segment.

Belongs to the ATPase B chain family. F-type ATPases have 2 components, F(1) - the catalytic core - and F(0) - the membrane proton channel. F(1) has five subunits: alpha(3), beta(3), gamma(1), delta(1), epsilon(1). F(0) has three main subunits: a(1), b(2) and c(10-14). The alpha and beta chains form an alternating ring which encloses part of the gamma chain. F(1) is attached to F(0) by a central stalk formed by the gamma and epsilon chains, while a peripheral stalk is formed by the delta and b chains.

It localises to the cell inner membrane. Its function is as follows. F(1)F(0) ATP synthase produces ATP from ADP in the presence of a proton or sodium gradient. F-type ATPases consist of two structural domains, F(1) containing the extramembraneous catalytic core and F(0) containing the membrane proton channel, linked together by a central stalk and a peripheral stalk. During catalysis, ATP synthesis in the catalytic domain of F(1) is coupled via a rotary mechanism of the central stalk subunits to proton translocation. In terms of biological role, component of the F(0) channel, it forms part of the peripheral stalk, linking F(1) to F(0). This Maricaulis maris (strain MCS10) (Caulobacter maris) protein is ATP synthase subunit b 1.